The primary structure comprises 490 residues: Betaine aldehyde dehydrogenase (490 aa).

Residues Thr-26, Ile-27, and Asp-93 each coordinate K(+). 150 to 152 (GAW) provides a ligand contact to NAD(+). Residue Lys-162 is the Charge relay system of the active site. NAD(+) is bound at residue 176 to 179 (KPSE). K(+) is bound at residue Val-180. Residue 230 to 233 (GVAS) participates in NAD(+) binding. Leu-246 is a K(+) binding site. Glu-252 acts as the Proton acceptor in catalysis. Residues Gly-254, Cys-286, and Glu-387 each coordinate NAD(+). Catalysis depends on Cys-286, which acts as the Nucleophile. Cys-286 bears the Cysteine sulfenic acid (-SOH) mark. The K(+) site is built by Lys-457 and Gly-460. Catalysis depends on Glu-464, which acts as the Charge relay system.

This sequence belongs to the aldehyde dehydrogenase family. In terms of assembly, dimer of dimers. Requires K(+) as cofactor.

The enzyme catalyses betaine aldehyde + NAD(+) + H2O = glycine betaine + NADH + 2 H(+). It functions in the pathway amine and polyamine biosynthesis; betaine biosynthesis via choline pathway; betaine from betaine aldehyde: step 1/1. Its function is as follows. Involved in the biosynthesis of the osmoprotectant glycine betaine. Catalyzes the irreversible oxidation of betaine aldehyde to the corresponding acid. This chain is Betaine aldehyde dehydrogenase, found in Shigella flexneri serotype 5b (strain 8401).